The following is a 269-amino-acid chain: Bis(5'-nucleosyl)-tetraphosphatase, symmetrical (269 aa).

The protein belongs to the Ap4A hydrolase family.

The catalysed reaction is P(1),P(4)-bis(5'-adenosyl) tetraphosphate + H2O = 2 ADP + 2 H(+). Its function is as follows. Hydrolyzes diadenosine 5',5'''-P1,P4-tetraphosphate to yield ADP. This is Bis(5'-nucleosyl)-tetraphosphatase, symmetrical from Vibrio cholerae serotype O1 (strain ATCC 39541 / Classical Ogawa 395 / O395).